A 309-amino-acid polypeptide reads, in one-letter code: Carboxylesterase Culp6 homolog (309 aa).

The chain crosses the membrane as a helical span at residues Ile-5–Val-25. A disulfide bond links Cys-55 and Cys-146. Residues Ser-157, Asp-253, and His-279 contribute to the active site. Cys-249 and Cys-256 are disulfide-bonded.

Belongs to the cutinase family.

Its subcellular location is the cell membrane. It carries out the reaction a butanoate ester + H2O = an aliphatic alcohol + butanoate + H(+). Inhibited by tetrahydrolipstatin (THL), a specific lipase inhibitor. Esterase that may be involved in cell wall biosynthesis and/or maintenance. Hydrolyzes pNP-butyrate (C4). This is Carboxylesterase Culp6 homolog from Corynebacterium glutamicum (strain ATCC 13032 / DSM 20300 / JCM 1318 / BCRC 11384 / CCUG 27702 / LMG 3730 / NBRC 12168 / NCIMB 10025 / NRRL B-2784 / 534).